We begin with the raw amino-acid sequence, 349 residues long: MLDLSLPSGLRDLLPDHSAHLAELSSKLHDVFSRFGYRRVFLPTLERLDVVERGLSPAALADVMKFVEPGSGEVVAIRPDITPQIARLYAARPDALPSPARLCYDGPVLRAREARAGRPREVYQAGVELLGAGGASADAEALVLLARSLERVGLKAPRVEVGHARFAEAVMEAARLPQRLRSAAWEALSRKDRAALGAAAAKGRGSSEAREAVPQLAGLFGDGALDRARAIARAVPGAAAPLAETEAALRIARRRGVREVAVDLGEARGLGYYTGITFAGYAPGAGAAVARGGRYDGLLARFGRPGPAIGFAVDLEFATQALERANGRGRGVRPRRASARGGRAGTRPR.

Positions 325–349 are disordered; it reads ANGRGRGVRPRRASARGGRAGTRPR. Positions 339-349 are enriched in low complexity; that stretch reads ARGGRAGTRPR.

Belongs to the class-II aminoacyl-tRNA synthetase family. HisZ subfamily. As to quaternary structure, heteromultimer composed of HisG and HisZ subunits.

The protein localises to the cytoplasm. It functions in the pathway amino-acid biosynthesis; L-histidine biosynthesis; L-histidine from 5-phospho-alpha-D-ribose 1-diphosphate: step 1/9. In terms of biological role, required for the first step of histidine biosynthesis. May allow the feedback regulation of ATP phosphoribosyltransferase activity by histidine. This chain is ATP phosphoribosyltransferase regulatory subunit, found in Anaeromyxobacter dehalogenans (strain 2CP-C).